Consider the following 636-residue polypeptide: LEAF RUST 10 DISEASE-RESISTANCE LOCUS RECEPTOR-LIKE PROTEIN KINASE-like 1.5 (636 aa).

The signal sequence occupies residues 1–26 (MSQPPWRCFSLLIFVLTIFSTKPSSA). Topologically, residues 27–257 (STSCSSSFHC…NNKRVNHIAV (231 aa)) are extracellular. Asparagine 73, asparagine 102, asparagine 146, and asparagine 224 each carry an N-linked (GlcNAc...) asparagine glycan. A helical membrane pass occupies residues 258 to 278 (LSLIFALTCLLLVFSVAVAIF). Topologically, residues 279-636 (RSRRASFLSS…RVADDDVAKN (358 aa)) are cytoplasmic. The 305-residue stretch at 324-628 (FDPKRKIGDG…LRRIRSHTRV (305 aa)) folds into the Protein kinase domain. ATP contacts are provided by residues 330–338 (IGDGGFGSV) and lysine 352. The active-site Proton acceptor is aspartate 458.

This sequence belongs to the protein kinase superfamily. Ser/Thr protein kinase family.

It is found in the cell membrane. The catalysed reaction is L-seryl-[protein] + ATP = O-phospho-L-seryl-[protein] + ADP + H(+). It carries out the reaction L-threonyl-[protein] + ATP = O-phospho-L-threonyl-[protein] + ADP + H(+). This is LEAF RUST 10 DISEASE-RESISTANCE LOCUS RECEPTOR-LIKE PROTEIN KINASE-like 1.5 from Arabidopsis thaliana (Mouse-ear cress).